Reading from the N-terminus, the 281-residue chain is N-acetyltransferase ECO1 (281 aa).

A CCHH-type zinc finger spans residues 33-57 (VKCDKCEMSYSSTSIEDRAIHEKYH). The interval 86–105 (LSRSTGTITPLNSSPLKKSS) is disordered. Positions 95–105 (PLNSSPLKKSS) are enriched in low complexity. An N6-acetyllysine; by autocatalysis modification is found at lysine 223.

This sequence belongs to the acetyltransferase family. ECO subfamily. In terms of assembly, binds specifically to CHL12, RFC1, RFC2, RFC3, RFC4, RFC5 and RAD24 when members of an RFC complex. Interacts with CHL1 and MPS3. Autoacetylates in vitro.

It is found in the nucleus. Its function is as follows. Required for establishment of sister chromatid cohesion during S phase but not for its further maintenance during G2 or M phases or for loading the cohesin complex onto DNA. Interacts with the three known alternate replication factor C (RFC) complexes, suggesting that these complexes have essential but redundant activity in cohesion establishment. Acts by acetylating the cohesin complex component SMC3. In vitro, possesses acetyltransferase activity where it can acetylate itself and components of the cohesin complex (MCD1, IRR1 and PDS5), but is unable to acetylate histones. This is N-acetyltransferase ECO1 (ECO1) from Saccharomyces cerevisiae (strain ATCC 204508 / S288c) (Baker's yeast).